A 72-amino-acid chain; its full sequence is Putative snRNP Sm-like protein (72 aa).

One can recognise a Sm domain in the interval 4–72 (RPLDILNNAL…RGDNVVYVSP (69 aa)).

This sequence belongs to the snRNP Sm proteins family.

In Methanosarcina barkeri (strain Fusaro / DSM 804), this protein is Putative snRNP Sm-like protein.